The primary structure comprises 402 residues: GDSL esterase/lipase At1g20120 (402 aa).

A signal peptide spans 1 to 35 (MLQDRVSGSLSSSKISRCVLFLSLFCFFLLTMHAS). Residues 41 to 69 (RVPNPGPSPAPEPKPCPSPGPNPAPATTK) are disordered. Residues 44–64 (NPGPSPAPEPKPCPSPGPNPA) show a composition bias toward pro residues. N-linked (GlcNAc...) asparagine glycosylation occurs at N73. Residue S85 is the Nucleophile of the active site. 2 N-linked (GlcNAc...) asparagine glycosylation sites follow: N314 and N367. Catalysis depends on residues D375 and H378.

It belongs to the 'GDSL' lipolytic enzyme family.

It is found in the secreted. This is GDSL esterase/lipase At1g20120 from Arabidopsis thaliana (Mouse-ear cress).